We begin with the raw amino-acid sequence, 218 residues long: 7-cyano-7-deazaguanine synthase (218 aa).

Position 10-20 (10-20 (FSGGQDSTTCL)) interacts with ATP. Zn(2+) contacts are provided by Cys-186, Cys-195, Cys-198, and Cys-201.

Belongs to the QueC family. As to quaternary structure, homodimer. Requires Zn(2+) as cofactor.

The enzyme catalyses 7-carboxy-7-deazaguanine + NH4(+) + ATP = 7-cyano-7-deazaguanine + ADP + phosphate + H2O + H(+). The protein operates within purine metabolism; 7-cyano-7-deazaguanine biosynthesis. Functionally, catalyzes the ATP-dependent conversion of 7-carboxy-7-deazaguanine (CDG) to 7-cyano-7-deazaguanine (preQ(0)). The protein is 7-cyano-7-deazaguanine synthase of Exiguobacterium sibiricum (strain DSM 17290 / CCUG 55495 / CIP 109462 / JCM 13490 / 255-15).